Consider the following 1399-residue polypeptide: DNA-directed RNA polymerase subunit beta' (1399 aa).

Residues Cys-70, Cys-72, Cys-85, and Cys-88 each contribute to the Zn(2+) site. The Mg(2+) site is built by Asp-460, Asp-462, and Asp-464. Residues Cys-814, Cys-888, Cys-895, and Cys-898 each coordinate Zn(2+).

Belongs to the RNA polymerase beta' chain family. The RNAP catalytic core consists of 2 alpha, 1 beta, 1 beta' and 1 omega subunit. When a sigma factor is associated with the core the holoenzyme is formed, which can initiate transcription. Mg(2+) serves as cofactor. The cofactor is Zn(2+).

It catalyses the reaction RNA(n) + a ribonucleoside 5'-triphosphate = RNA(n+1) + diphosphate. Its function is as follows. DNA-dependent RNA polymerase catalyzes the transcription of DNA into RNA using the four ribonucleoside triphosphates as substrates. This Pseudomonas fluorescens (strain ATCC BAA-477 / NRRL B-23932 / Pf-5) protein is DNA-directed RNA polymerase subunit beta'.